A 235-amino-acid polypeptide reads, in one-letter code: 7-carboxy-7-deazaguanine synthase (235 aa).

Substrate contacts are provided by residues 27 to 29 (LQG) and Arg-42. In terms of domain architecture, Radical SAM core spans 33 to 235 (FSGQPSVFVR…VQVHKILKIA (203 aa)). Residues Cys-46, Cys-50, and Cys-53 each coordinate [4Fe-4S] cluster. Residue Thr-55 coordinates Mg(2+). Thr-87 is a substrate binding site. S-adenosyl-L-methionine is bound by residues Gly-89 and 133-135 (SPK).

It belongs to the radical SAM superfamily. 7-carboxy-7-deazaguanine synthase family. In terms of assembly, homodimer. Requires [4Fe-4S] cluster as cofactor. S-adenosyl-L-methionine serves as cofactor. It depends on Mg(2+) as a cofactor.

It catalyses the reaction 6-carboxy-5,6,7,8-tetrahydropterin + H(+) = 7-carboxy-7-deazaguanine + NH4(+). The protein operates within purine metabolism; 7-cyano-7-deazaguanine biosynthesis. Functionally, catalyzes the complex heterocyclic radical-mediated conversion of 6-carboxy-5,6,7,8-tetrahydropterin (CPH4) to 7-carboxy-7-deazaguanine (CDG), a step common to the biosynthetic pathways of all 7-deazapurine-containing compounds. The protein is 7-carboxy-7-deazaguanine synthase of Rhodospirillum rubrum (strain ATCC 11170 / ATH 1.1.1 / DSM 467 / LMG 4362 / NCIMB 8255 / S1).